Here is a 109-residue protein sequence, read N- to C-terminus: U3-lycotoxin-Ls1x (109 aa).

A signal peptide spans 1–20; that stretch reads MKFVLLFGVLLVTLFSYSSA. The propeptide occupies 21-44; the sequence is EMLDDFDQADEDELLSLIEKEEAR. Cystine bridges form between Cys48-Cys63, Cys55-Cys72, Cys62-Cys88, and Cys74-Cys86.

Belongs to the neurotoxin 19 (CSTX) family. 01 subfamily. As to expression, expressed by the venom gland.

It is found in the secreted. The chain is U3-lycotoxin-Ls1x from Lycosa singoriensis (Wolf spider).